A 91-amino-acid polypeptide reads, in one-letter code: CRISPR-associated endoribonuclease Cas2 (91 aa).

Asp14 is a binding site for Mg(2+).

This sequence belongs to the CRISPR-associated endoribonuclease Cas2 protein family. As to quaternary structure, homodimer, forms a heterotetramer with a Cas1 homodimer. Requires Mg(2+) as cofactor.

Its function is as follows. CRISPR (clustered regularly interspaced short palindromic repeat), is an adaptive immune system that provides protection against mobile genetic elements (viruses, transposable elements and conjugative plasmids). CRISPR clusters contain sequences complementary to antecedent mobile elements and target invading nucleic acids. CRISPR clusters are transcribed and processed into CRISPR RNA (crRNA). Functions as a ssRNA-specific endoribonuclease. Involved in the integration of spacer DNA into the CRISPR cassette. This is CRISPR-associated endoribonuclease Cas2 from Nanoarchaeum equitans (strain Kin4-M).